A 1021-amino-acid chain; its full sequence is Inversin (1021 aa).

ANK repeat units follow at residues 7-36 (QNPS…LRDS), 40-69 (FGRT…GINK), 73-102 (SQRT…DWRL), 106-137 (EEMT…EVDT), 141-170 (NKQT…NIGI), 174-206 (EGKI…TESL), 213-243 (EGRT…SVTA), 247-276 (LFRT…SGMI), 281-310 (QGAT…VRDE), 314-343 (EGRT…DIDI), 349-378 (YGGT…MVDP), 382-411 (MKHT…RVDL), 415-444 (DGHS…SPNL), 448-477 (AGRT…DPNI), 481-510 (EGRT…FPNH), and 516-546 (ERYT…SIAA). Positions 483–491 (RTALHWSCN) match the D-box 1 motif. The IQ 1 domain maps to 548 to 577 (QDIAASSIQALYKGYKVRRAFRERKKLLMR). 2 stretches are compositionally biased toward basic and acidic residues: residues 579–598 (EQLR…REAE) and 653–669 (SRRE…REPE). Disordered stretches follow at residues 579 to 602 (EQLR…QQLS), 632 to 691 (KDSV…KKCP), and 704 to 868 (GPDT…GTCS). Residues 722-731 (PAGSSRPGSA) are compositionally biased toward low complexity. Composition is skewed to polar residues over residues 759–781 (GAHS…TSKG) and 791–802 (TGSQPSNNTSVT). The span at 803 to 866 (RQKEKRQEKE…KEKEKKKDGT (64 aa)) shows a compositional bias: basic and acidic residues. The D-box 2 motif lies at 862–870 (KKDGTCSKN). Residues 869–898 (KNQAAVVIQRAWRRSCVRGRIRKVLCRSLK) form the IQ 2 domain.

As to quaternary structure, binds calmodulin via its IQ domains.

Its subcellular location is the cytoplasm. The protein resides in the cytoskeleton. Functionally, required for normal renal development and establishment of left-right axis. Probably acts as a molecular switch between different Wnt signaling pathways. Inhibits the canonical Wnt pathway by targeting cytoplasmic disheveled for degradation by the ubiquitin-proteasome. This suggests that it is required in renal development to oppose the repression of terminal differentiation of tubular epithelial cells by Wnt signaling. The polypeptide is Inversin (invs) (Danio rerio (Zebrafish)).